Here is a 344-residue protein sequence, read N- to C-terminus: Methionine import ATP-binding protein MetN 1 (344 aa).

An ABC transporter domain is found at 2 to 241; the sequence is IELRNLSQRF…PHHEVTRALI (240 aa). Residue 38–45 participates in ATP binding; it reads GRSGAGKS.

Belongs to the ABC transporter superfamily. Methionine importer (TC 3.A.1.24) family. As to quaternary structure, the complex is composed of two ATP-binding proteins (MetN), two transmembrane proteins (MetI) and a solute-binding protein (MetQ).

The protein resides in the cell inner membrane. The catalysed reaction is L-methionine(out) + ATP + H2O = L-methionine(in) + ADP + phosphate + H(+). The enzyme catalyses D-methionine(out) + ATP + H2O = D-methionine(in) + ADP + phosphate + H(+). In terms of biological role, part of the ABC transporter complex MetNIQ involved in methionine import. Responsible for energy coupling to the transport system. This Burkholderia ambifaria (strain ATCC BAA-244 / DSM 16087 / CCUG 44356 / LMG 19182 / AMMD) (Burkholderia cepacia (strain AMMD)) protein is Methionine import ATP-binding protein MetN 1.